We begin with the raw amino-acid sequence, 619 residues long: Long-chain fatty acid transport protein 6 (619 aa).

The next 2 helical transmembrane spans lie at 22–42 and 119–139; these read LLFP…RYGI and VHVW…NSNL. 221–232 contacts AMP; sequence YIFTSGTTGLPK.

Belongs to the ATP-dependent AMP-binding enzyme family.

It is found in the cell membrane. Its subcellular location is the sarcolemma. It catalyses the reaction a fatty acid(in) = a fatty acid(out). The catalysed reaction is hexadecanoate(out) = hexadecanoate(in). The enzyme catalyses (9Z,12Z)-octadecadienoate(out) = (9Z,12Z)-octadecadienoate(in). It carries out the reaction (9Z)-octadecenoate(out) = (9Z)-octadecenoate(in). It catalyses the reaction a very long-chain fatty acid + ATP + CoA = a very long-chain fatty acyl-CoA + AMP + diphosphate. The catalysed reaction is tetracosanoate + ATP + CoA = tetracosanoyl-CoA + AMP + diphosphate. The enzyme catalyses a long-chain fatty acid + ATP + CoA = a long-chain fatty acyl-CoA + AMP + diphosphate. It carries out the reaction (9Z)-octadecenoate + ATP + CoA = (9Z)-octadecenoyl-CoA + AMP + diphosphate. It catalyses the reaction (5Z,8Z,11Z,14Z)-eicosatetraenoate + ATP + CoA = (5Z,8Z,11Z,14Z)-eicosatetraenoyl-CoA + AMP + diphosphate. Its function is as follows. Mediates the import of long-chain fatty acids (LCFA) into the cell by facilitating their transport at the plasma membrane. Also functions as an acyl-CoA ligase catalyzing the ATP-dependent formation of fatty acyl-CoA using LCFA and very-long-chain fatty acids (VLCFA) as substrates. Plays a pivotal role in regulating available LCFA substrates from exogenous sources in tissues undergoing high levels of beta-oxidation such as the heart. This chain is Long-chain fatty acid transport protein 6 (Slc27a6), found in Mus musculus (Mouse).